The chain runs to 461 residues: tRNA modification GTPase MnmE (461 aa).

(6S)-5-formyl-5,6,7,8-tetrahydrofolate-binding residues include arginine 23, glutamate 88, and arginine 127. The TrmE-type G domain maps to 223-383 (GLNTVIVGKP…LKECIKNLFF (161 aa)). Asparagine 233 contributes to the K(+) binding site. Residues 233 to 238 (NVGKSS), 252 to 258 (TEIPGTT), and 277 to 280 (DTAG) each bind GTP. Serine 237 serves as a coordination point for Mg(2+). K(+)-binding residues include threonine 252, isoleucine 254, and threonine 257. Threonine 258 lines the Mg(2+) pocket. Lysine 461 provides a ligand contact to (6S)-5-formyl-5,6,7,8-tetrahydrofolate.

This sequence belongs to the TRAFAC class TrmE-Era-EngA-EngB-Septin-like GTPase superfamily. TrmE GTPase family. In terms of assembly, homodimer. Heterotetramer of two MnmE and two MnmG subunits. K(+) serves as cofactor.

The protein localises to the cytoplasm. Exhibits a very high intrinsic GTPase hydrolysis rate. Involved in the addition of a carboxymethylaminomethyl (cmnm) group at the wobble position (U34) of certain tRNAs, forming tRNA-cmnm(5)s(2)U34. This Clostridium botulinum (strain Okra / Type B1) protein is tRNA modification GTPase MnmE.